The sequence spans 483 residues: Cobyric acid synthase (483 aa).

The 188-residue stretch at 251 to 438 folds into the GATase cobBQ-type domain; the sequence is ALIVAVPMLP…LHGVFSADRF (188 aa). Cysteine 333 serves as the catalytic Nucleophile. Histidine 430 is a catalytic residue.

This sequence belongs to the CobB/CobQ family. CobQ subfamily.

The protein operates within cofactor biosynthesis; adenosylcobalamin biosynthesis. Its function is as follows. Catalyzes amidations at positions B, D, E, and G on adenosylcobyrinic A,C-diamide. NH(2) groups are provided by glutamine, and one molecule of ATP is hydrogenolyzed for each amidation. This is Cobyric acid synthase from Brucella melitensis biotype 2 (strain ATCC 23457).